Consider the following 171-residue polypeptide: 6,7-dimethyl-8-ribityllumazine synthase (171 aa).

Residues Phe24, 58-60 (ALE), and 82-84 (AVI) contribute to the 5-amino-6-(D-ribitylamino)uracil site. A (2S)-2-hydroxy-3-oxobutyl phosphate-binding site is contributed by 87–88 (ET). His90 (proton donor) is an active-site residue. Asn115 is a 5-amino-6-(D-ribitylamino)uracil binding site. Arg129 is a binding site for (2S)-2-hydroxy-3-oxobutyl phosphate. The tract at residues 150–171 (ALDQLGDDEDEEEDEEDEEERA) is disordered. The span at 154-171 (LGDDEDEEEDEEDEEERA) shows a compositional bias: acidic residues.

The protein belongs to the DMRL synthase family.

It carries out the reaction (2S)-2-hydroxy-3-oxobutyl phosphate + 5-amino-6-(D-ribitylamino)uracil = 6,7-dimethyl-8-(1-D-ribityl)lumazine + phosphate + 2 H2O + H(+). It participates in cofactor biosynthesis; riboflavin biosynthesis; riboflavin from 2-hydroxy-3-oxobutyl phosphate and 5-amino-6-(D-ribitylamino)uracil: step 1/2. Its function is as follows. Catalyzes the formation of 6,7-dimethyl-8-ribityllumazine by condensation of 5-amino-6-(D-ribitylamino)uracil with 3,4-dihydroxy-2-butanone 4-phosphate. This is the penultimate step in the biosynthesis of riboflavin. This chain is 6,7-dimethyl-8-ribityllumazine synthase, found in Burkholderia ambifaria (strain MC40-6).